Reading from the N-terminus, the 360-residue chain is MTTTLQQRESASLWEQFCQWITSTNNRLYIGWFGVIMIPTLLTATTCFIIAFIAAPPVDIDGIREPVAGSLLYGNNIISGAVVPSSNAIGLHFYPIWEAASLDEWLYNGGPYQLVIFHFLLGVFCYLGRQWELSFRLGMRPWICVAYSAPVSAATAVFLIYPIGQGSFSDGMPLGISGTFNFMFVFQAEHNILMHPFHMLGVAGVFGGSLFSAMHGSLVTSSLVRETTEIESQNYGYKFGQEEETYNIVAAHGYFGRLIFQYASFNNSRSLHFFLGAWPVIGIWFTAMGVSTMAFNLNGFNFNQSILDSQGRVIGTWADVLNRAGIGMEVMHERNAHNFPLDLASGEQAPVALIAPAING.

A run of 3 helical transmembrane segments spans residues 29 to 46, 118 to 133, and 142 to 156; these read YIGW…TATT, HFLL…QWEL, and WICV…AATA. Residue His-118 participates in chlorophyll a binding. Tyr-126 is a pheophytin a binding site. [CaMn4O5] cluster is bound by residues Asp-170 and Glu-189. A helical membrane pass occupies residues 197–218; the sequence is FHMLGVAGVFGGSLFSAMHGSL. Residue His-198 coordinates chlorophyll a. A quinone is bound by residues His-215 and 264 to 265; that span reads SF. His-215 contributes to the Fe cation binding site. His-272 serves as a coordination point for Fe cation. The helical transmembrane segment at 274 to 288 threads the bilayer; the sequence is FLGAWPVIGIWFTAM. Positions 332, 333, 342, and 344 each coordinate [CaMn4O5] cluster. Positions 345-360 are excised as a propeptide; sequence SGEQAPVALIAPAING.

It belongs to the reaction center PufL/M/PsbA/D family. In terms of assembly, PSII is composed of 1 copy each of membrane proteins PsbA, PsbB, PsbC, PsbD, PsbE, PsbF, PsbH, PsbI, PsbJ, PsbK, PsbL, PsbM, PsbT, PsbX, PsbY, PsbZ, Psb30/Ycf12, peripheral proteins PsbO, CyanoQ (PsbQ), PsbU, PsbV and a large number of cofactors. It forms dimeric complexes. The D1/D2 heterodimer binds P680, chlorophylls that are the primary electron donor of PSII, and subsequent electron acceptors. It shares a non-heme iron and each subunit binds pheophytin, quinone, additional chlorophylls, carotenoids and lipids. D1 provides most of the ligands for the Mn4-Ca-O5 cluster of the oxygen-evolving complex (OEC). There is also a Cl(-1) ion associated with D1 and D2, which is required for oxygen evolution. The PSII complex binds additional chlorophylls, carotenoids and specific lipids. is required as a cofactor. Post-translationally, tyr-161 forms a radical intermediate that is referred to as redox-active TyrZ, YZ or Y-Z. C-terminally processed by CtpA; processing is essential to allow assembly of the oxygen-evolving complex and thus photosynthetic growth.

It is found in the cellular thylakoid membrane. The enzyme catalyses 2 a plastoquinone + 4 hnu + 2 H2O = 2 a plastoquinol + O2. Its function is as follows. Photosystem II (PSII) is a light-driven water:plastoquinone oxidoreductase that uses light energy to abstract electrons from H(2)O, generating O(2) and a proton gradient subsequently used for ATP formation. It consists of a core antenna complex that captures photons, and an electron transfer chain that converts photonic excitation into a charge separation. The D1/D2 (PsbA/PsbD) reaction center heterodimer binds P680, the primary electron donor of PSII as well as several subsequent electron acceptors. The sequence is that of Photosystem II protein D1 from Microcystis aeruginosa (strain NIES-843 / IAM M-2473).